Reading from the N-terminus, the 562-residue chain is Putative transport protein NT01EI_2530 (562 aa).

6 helical membrane-spanning segments follow: residues 8–28 (LLTG…LCLG), 32–52 (LGSI…LLGQ), 66–86 (FMLF…SIFF), 94–114 (MLAL…GKLF), 118–138 (IGLT…LVGA), and 158–178 (HLSL…IFGA). RCK C-terminal domains are found at residues 202 to 288 (LDND…SFRN) and 290 to 373 (KEVF…RIGF). The next 5 membrane-spanning stretches (helical) occupy residues 383–403 (LLAF…TFQF), 406–426 (FSFG…LGFL), 443–463 (MVKE…AGAG), 477–497 (IAGL…GAFV), and 541–561 (IANV…PGVV).

The protein belongs to the AAE transporter (TC 2.A.81) family. YbjL subfamily.

Its subcellular location is the cell membrane. The sequence is that of Putative transport protein NT01EI_2530 from Edwardsiella ictaluri (strain 93-146).